The following is a 352-amino-acid chain: Ion-translocating oxidoreductase complex subunit D (352 aa).

A run of 4 helical transmembrane segments spans residues 20–40, 42–62, 89–109, and 123–143; these read IMLL…WFFG, GTLV…ALVL, IPPL…VIIA, and PAMI…TSWL. At threonine 187 the chain carries FMN phosphoryl threonine. Helical transmembrane passes span 214 to 234, 242 to 262, 267 to 287, 301 to 321, and 322 to 342; these read ILAG…GVWL, WHIP…GWLF, LAAP…FFIL, LIFG…GGYP, and DGVA…DYYT.

This sequence belongs to the NqrB/RnfD family. The complex is composed of six subunits: RsxA, RsxB, RsxC, RsxD, RsxE and RsxG. FMN serves as cofactor.

The protein resides in the cell inner membrane. Part of a membrane-bound complex that couples electron transfer with translocation of ions across the membrane. Required to maintain the reduced state of SoxR. This Escherichia coli O81 (strain ED1a) protein is Ion-translocating oxidoreductase complex subunit D.